The chain runs to 237 residues: Ribonuclease PH (237 aa).

Residues R86 and 124 to 126 contribute to the phosphate site; that span reads GTR.

The protein belongs to the RNase PH family. In terms of assembly, homohexameric ring arranged as a trimer of dimers.

It catalyses the reaction tRNA(n+1) + phosphate = tRNA(n) + a ribonucleoside 5'-diphosphate. Its function is as follows. Phosphorolytic 3'-5' exoribonuclease that plays an important role in tRNA 3'-end maturation. Removes nucleotide residues following the 3'-CCA terminus of tRNAs; can also add nucleotides to the ends of RNA molecules by using nucleoside diphosphates as substrates, but this may not be physiologically important. Probably plays a role in initiation of 16S rRNA degradation (leading to ribosome degradation) during starvation. In Bradyrhizobium sp. (strain ORS 278), this protein is Ribonuclease PH.